Consider the following 468-residue polypeptide: UDP-N-acetylmuramate--L-alanine ligase (468 aa).

121–127 (GSHGKTT) contacts ATP.

This sequence belongs to the MurCDEF family.

The protein resides in the cytoplasm. The catalysed reaction is UDP-N-acetyl-alpha-D-muramate + L-alanine + ATP = UDP-N-acetyl-alpha-D-muramoyl-L-alanine + ADP + phosphate + H(+). It participates in cell wall biogenesis; peptidoglycan biosynthesis. Its function is as follows. Cell wall formation. The polypeptide is UDP-N-acetylmuramate--L-alanine ligase (Borrelia garinii subsp. bavariensis (strain ATCC BAA-2496 / DSM 23469 / PBi) (Borreliella bavariensis)).